A 792-amino-acid polypeptide reads, in one-letter code: Vicilin Car i 2.0101 (792 aa).

The N-terminal stretch at 1-26 (MVTKAKIPLFLFLSALFLALVCSSLA) is a signal peptide. Disordered regions lie at residues 132–153 (ERRE…DPRE), 182–217 (RFEE…YRQC), 240–272 (ERLE…EQRY), 302–325 (EERE…CQRR), and 350–394 (QQGR…ESGE). Basic and acidic residues-rich tracts occupy residues 182–200 (RFEE…RGRD) and 207–217 (PRDPREQYRQC). Positions 302-314 (EERERQRGRDRQD) are enriched in basic and acidic residues. Positions 315 to 325 (PQQQYHRCQRR) are enriched in low complexity. A compositionally biased stretch (basic and acidic residues) spans 350–375 (QQGREWGPDQASPRRESRGREEEQQR). Y379 provides a ligand contact to Cu cation. Cupin type-1 domains lie at 384–537 (QGLR…DRLE) and 582–754 (ISLK…EEIE). Residues C652, H654, and H698 each contribute to the Cu cation site. Residues 727 to 754 (LAGQNNIINQLEREAKELSFNMPREEIE) adopt a coiled-coil conformation.

Belongs to the 7S seed storage protein family. As to quaternary structure, homotrimer. Expressed in seed (at protein level). Expressed in seed.

In terms of biological role, seed storage protein. The protein is Vicilin Car i 2.0101 of Carya illinoinensis (Pecan).